The primary structure comprises 226 residues: Transcriptional regulatory protein PcoR (226 aa).

The 115-residue stretch at 3–117 (RILIVEDEQK…ELVARVRTLL (115 aa)) folds into the Response regulatory domain. Asp52 is modified (4-aspartylphosphate). Residues 125-223 (ATVCTIADMT…VRGAGYVLEI (99 aa)) constitute a DNA-binding region (ompR/PhoB-type).

Post-translationally, phosphorylated by PcoS.

It is found in the cytoplasm. Its function is as follows. Probable member of a two-component regulatory system PcoS/PcoR. May be involved in the activation of copper resistance gene operon pcoABCD by binding to a specific site on the cop operon promoter (copper box). In Escherichia coli, this protein is Transcriptional regulatory protein PcoR (pcoR).